The primary structure comprises 41 residues: Large ribosomal subunit protein bL36 (41 aa).

Belongs to the bacterial ribosomal protein bL36 family.

In Rhodopseudomonas palustris (strain TIE-1), this protein is Large ribosomal subunit protein bL36.